We begin with the raw amino-acid sequence, 437 residues long: Branched-chain amino acid transport system 2 carrier protein (437 aa).

12 consecutive transmembrane segments (helical) span residues 9-29 (LLAL…IIFP), 43-63 (AAFG…VALA), 80-100 (AGVA…ATPR), 117-137 (GGVP…FLVL), 149-169 (VITP…IFAP), 192-212 (GYLT…ATAI), 228-248 (MIAG…LFYL), 280-300 (LLLA…LITA), 308-328 (LLPV…LLVA), 335-355 (LISL…VLIA), 369-389 (VFVP…LGAA), and 404-424 (LADQ…LAVV).

The protein belongs to the branched chain amino acid transporter family.

It localises to the cell inner membrane. Functionally, component of the LIV-II transport system for branched-chain amino acids. BraB is specific for isoleucine, leucine and valine. The LIV-II transport system is coupled to sodium and lithium ions. This chain is Branched-chain amino acid transport system 2 carrier protein (braB), found in Pseudomonas aeruginosa (strain ATCC 15692 / DSM 22644 / CIP 104116 / JCM 14847 / LMG 12228 / 1C / PRS 101 / PAO1).